Consider the following 938-residue polypeptide: Isoleucine--tRNA ligase (938 aa).

Residues 58–68 (PYANGSIHIGH) carry the 'HIGH' region motif. K183 carries the post-translational modification N6-acetyllysine. An L-isoleucyl-5'-AMP-binding site is contributed by E561. The 'KMSKS' region motif lies at 602–606 (KMSKS). Residue K605 participates in ATP binding. Zn(2+) is bound by residues C901, C904, C921, and C924.

It belongs to the class-I aminoacyl-tRNA synthetase family. IleS type 1 subfamily. Monomer. It depends on Zn(2+) as a cofactor.

It localises to the cytoplasm. It catalyses the reaction tRNA(Ile) + L-isoleucine + ATP = L-isoleucyl-tRNA(Ile) + AMP + diphosphate. Its function is as follows. Catalyzes the attachment of isoleucine to tRNA(Ile). As IleRS can inadvertently accommodate and process structurally similar amino acids such as valine, to avoid such errors it has two additional distinct tRNA(Ile)-dependent editing activities. One activity is designated as 'pretransfer' editing and involves the hydrolysis of activated Val-AMP. The other activity is designated 'posttransfer' editing and involves deacylation of mischarged Val-tRNA(Ile). This chain is Isoleucine--tRNA ligase, found in Escherichia coli O6:K15:H31 (strain 536 / UPEC).